Consider the following 644-residue polypeptide: Core protein VP4 (644 aa).

This sequence belongs to the orbivirus VP4 family.

It localises to the virion. Functionally, the VP4 protein is one of the five proteins (with VP1, VP3, VP6 and VP7) which form the inner capsid of the virus. This chain is Core protein VP4 (Segment-4), found in Bluetongue virus 2 (isolate USA) (BTV 2).